The primary structure comprises 294 residues: tRNA pseudouridine synthase B (294 aa).

Asp39 acts as the Nucleophile in catalysis.

It belongs to the pseudouridine synthase TruB family. Type 1 subfamily.

The enzyme catalyses uridine(55) in tRNA = pseudouridine(55) in tRNA. Functionally, responsible for synthesis of pseudouridine from uracil-55 in the psi GC loop of transfer RNAs. The sequence is that of tRNA pseudouridine synthase B from Streptococcus pyogenes serotype M28 (strain MGAS6180).